We begin with the raw amino-acid sequence, 332 residues long: Oxygen-dependent coproporphyrinogen-III oxidase (332 aa).

A coproporphyrinogen III-binding site is contributed by S119. H133 acts as the Proton donor in catalysis. Residues 135 to 137 and 284 to 285 each bind coproporphyrinogen III; these read NVR and GR.

It belongs to the aerobic coproporphyrinogen-III oxidase family. In terms of assembly, homodimer.

It catalyses the reaction coproporphyrinogen III + O2 + 2 H(+) = protoporphyrinogen IX + 2 CO2 + 2 H2O. It functions in the pathway porphyrin-containing compound metabolism; protoporphyrin-IX biosynthesis; protoporphyrinogen-IX from coproporphyrinogen-III (O2 route): step 1/1. Its function is as follows. Involved in the heme biosynthesis. Catalyzes the aerobic oxidative decarboxylation of propionate groups of rings A and B of coproporphyrinogen-III to yield the vinyl groups in protoporphyrinogen-IX. The chain is Oxygen-dependent coproporphyrinogen-III oxidase (cpox) from Dictyostelium discoideum (Social amoeba).